The following is a 208-amino-acid chain: Guanylate kinase (208 aa).

A Guanylate kinase-like domain is found at 4–185 (GNLYILSAPS…TLKDLQSILQ (182 aa)). Position 11 to 18 (11 to 18 (APSGAGKS)) interacts with ATP.

Belongs to the guanylate kinase family.

The protein localises to the cytoplasm. The catalysed reaction is GMP + ATP = GDP + ADP. Its function is as follows. Essential for recycling GMP and indirectly, cGMP. In Haemophilus influenzae (strain 86-028NP), this protein is Guanylate kinase.